We begin with the raw amino-acid sequence, 761 residues long: Nitrogen fixation protein FixI (761 aa).

Residues 1 to 120 lie on the Cytoplasmic side of the membrane; the sequence is MSCCTMDAES…SAPESDKTRN (120 aa). Residues 36–106 form the HMA domain; the sequence is RQLDLSVSDV…EINSAGYRAH (71 aa). The a metal cation site is built by C47 and C50. The helical transmembrane segment at 121-142 threads the bilayer; sequence QLLLAIGVSGFAAPNIMLLSVS. The Extracellular portion of the chain corresponds to 143–155; that stretch reads VWSGADAATRDMF. A helical transmembrane segment spans residues 156-177; that stretch reads HWISAMIAAPALVYAGRFFFKS. Topologically, residues 178–184 are cytoplasmic; the sequence is AWNALRH. The helical transmembrane segment at 185 to 205 threads the bilayer; that stretch reads GRTNMDVPISVTVSLSYAVSL. At 206 to 217 the chain is on the extracellular side; it reads WETVHHGEHAWF. Residues 218-238 traverse the membrane as a helical segment; the sequence is DASVSLLFFLLIGRTLDHIMR. Over 239–367 the chain is Cytoplasmic; it reads EKARAAINGL…RARYRRIADR (129 aa). Residues 368 to 390 traverse the membrane as a helical segment; it reads AATLYSPVVHLLALVSFLAWGFL. Topologically, residues 391 to 395 are extracellular; that stretch reads GGDWK. Residues 396–415 traverse the membrane as a helical segment; the sequence is QAMLVAVAVLIITCPCALGL. Over 416 to 691 the chain is Cytoplasmic; that stretch reads AVPVVQVVAA…AVARRSASLI (276 aa). Catalysis depends on D453, which acts as the 4-aspartylphosphate intermediate. Residues D637 and D641 each contribute to the Mg(2+) site. The helical transmembrane segment at 692 to 711 threads the bilayer; the sequence is RQNFALAIGYNVLAVPIAIA. At 712-716 the chain is on the extracellular side; that stretch reads GLATP. The helical transmembrane segment at 717 to 735 threads the bilayer; the sequence is LIAAVAMSTSSIIVVTNAL. The Cytoplasmic segment spans residues 736-761; the sequence is RLNGFGKRPDMHIRRGIGRSAEVKAA.

Belongs to the cation transport ATPase (P-type) (TC 3.A.3) family. Type IB subfamily.

The protein resides in the cell membrane. The enzyme catalyses ATP + H2O = ADP + phosphate + H(+). Its function is as follows. FixI is a pump of a specific cation involved in symbiotic nitrogen fixation. The four proteins FixG, FixH, FixI, and FixS may participate in a membrane-bound complex coupling the FixI cation pump with a redox process catalyzed by FixG. In Rhizobium leguminosarum bv. viciae, this protein is Nitrogen fixation protein FixI (fixI).